The chain runs to 359 residues: Aromatic amino acid aminotransferase (359 aa).

The segment covering 1 to 12 (MSETSPKLRAEL) has biased composition (basic and acidic residues). Residues 1–21 (MSETSPKLRAELEGIPTYKPG) are disordered. N6-(pyridoxal phosphate)lysine is present on K223.

Belongs to the class-II pyridoxal-phosphate-dependent aminotransferase family. As to quaternary structure, homodimer. Pyridoxal 5'-phosphate is required as a cofactor.

The catalysed reaction is an aromatic L-alpha-amino acid + 2-oxoglutarate = an aromatic oxo-acid + L-glutamate. Aminotransferase that catalyzes the conversion of aromatic amino acids and 2-oxoglutarate into corresponding aromatic oxo acids and L-glutamate. The sequence is that of Aromatic amino acid aminotransferase from Streptomyces coelicolor (strain ATCC BAA-471 / A3(2) / M145).